An 845-amino-acid polypeptide reads, in one-letter code: P protein (845 aa).

A disordered region spans residues 1–57; that stretch reads MRLENREGRPTSGVLEMELPQASAPSRAGLGSLGLVGLDSSNHRPQQGGSKAGSRGP. Over 1–183 the chain is Extracellular; sequence MRLENREGRP…HLSKLRCCVQ (183 aa). Over residues 26 to 40 the composition is skewed to low complexity; the sequence is SRAGLGSLGLVGLDS. The helical transmembrane segment at 184–204 threads the bilayer; that stretch reads WLKVSGLFVFVVLCSILFSLY. The Cytoplasmic portion of the chain corresponds to 205-337; the sequence is PDQGKFWQLL…QYLRASIEAQ (133 aa). A helical membrane pass occupies residues 338-358; it reads VTIAAVILAGVYVLIIFEIVH. The Extracellular portion of the chain corresponds to 359–360; sequence RT. Residues 361–381 form a helical membrane-spanning segment; that stretch reads LAAMLGSLAALAALAVIGDRP. Topologically, residues 382 to 393 are cytoplasmic; the sequence is TLTQVVEWIDFE. The chain crosses the membrane as a helical span at residues 394–414; sequence TLALLFGMMILVAIFSETGFF. Residues 415–429 are Extracellular-facing; that stretch reads DYCAVKAYQLSRGRV. A helical membrane pass occupies residues 430-450; it reads WAMIIMLCLIAAVLSAFLDNV. Over 451–513 the chain is Cytoplasmic; sequence TTALLFTPVT…ELRKMGLDFA (63 aa). Residues 514-534 traverse the membrane as a helical segment; that stretch reads GFTAHMFAGICFVLLFSFPLL. Over 535–629 the chain is Extracellular; the sequence is RLLYWNRKLY…KKHRISDRTL (95 aa). The helical transmembrane segment at 630–650 threads the bilayer; sequence LTKCVTVLGLVIFMFFLNSFV. Proline 651 is a topological domain (cytoplasmic). A helical transmembrane segment spans residues 652 to 672; it reads GVHLDLGWIAILGAIWLLILA. Topologically, residues 673–687 are extracellular; sequence DIHDFEIILHRVEWA. Residues 688–708 traverse the membrane as a helical segment; sequence TLLFFAALFILMEALAHLHLI. Topologically, residues 709–730 are cytoplasmic; sequence EYVGEQTALLIKMVPEDQRLAA. A helical membrane pass occupies residues 731–751; it reads AIIVVVWVSAIASSLIDNIPF. Topologically, residues 752–773 are extracellular; that stretch reads TATMIPVLLNLSRDPEISLPAP. Residues 774 to 794 traverse the membrane as a helical segment; the sequence is PLMYALALGACLGGNGTLIGA. At 795-820 the chain is on the cytoplasmic side; it reads SANVVCAGIAEQHGYGFSFMEFFRLG. A helical membrane pass occupies residues 821–841; it reads FPMMVVSCMVGMCYLLVAHVV. The Extracellular portion of the chain corresponds to 842–845; sequence MGWN.

The protein belongs to the CitM (TC 2.A.11) transporter family.

The protein localises to the melanosome membrane. The catalysed reaction is chloride(in) = chloride(out). Its function is as follows. Contributes to a melanosome-specific anion (chloride) current that modulates melanosomal pH for optimal tyrosinase activity required for melanogenesis and the melanosome maturation. One of the components of the mammalian pigmentary system. May serve as a key control point at which ethnic skin color variation is determined. Major determinant of brown and/or blue eye color. Seems to regulate the post-translational processing of tyrosinase, which catalyzes the limiting reaction in melanin synthesis. This is P protein (Oca2) from Sus scrofa (Pig).